We begin with the raw amino-acid sequence, 186 residues long: Elongation factor P (186 aa).

This sequence belongs to the elongation factor P family.

It is found in the cytoplasm. It functions in the pathway protein biosynthesis; polypeptide chain elongation. In terms of biological role, involved in peptide bond synthesis. Stimulates efficient translation and peptide-bond synthesis on native or reconstituted 70S ribosomes in vitro. Probably functions indirectly by altering the affinity of the ribosome for aminoacyl-tRNA, thus increasing their reactivity as acceptors for peptidyl transferase. The sequence is that of Elongation factor P from Shewanella denitrificans (strain OS217 / ATCC BAA-1090 / DSM 15013).